A 424-amino-acid polypeptide reads, in one-letter code: Bone morphogenetic protein 10 (424 aa).

A signal peptide spans Met-1–Gly-21. A propeptide spanning residues Ser-22–Arg-316 is cleaved from the precursor. Residues Asn-67 and Asn-131 are each glycosylated (N-linked (GlcNAc...) asparagine). 3 disulfides stabilise this stretch: Cys-323–Cys-389, Cys-352–Cys-421, and Cys-356–Cys-423.

Belongs to the TGF-beta family. Homodimer; disulfide-linked. Interacts with FBN1 (via N-terminal domain) and FBN2. Interacts with ENG. In terms of tissue distribution, detected in mammary epithelia (at protein level).

Its subcellular location is the secreted. Required for maintaining the proliferative activity of embryonic cardiomyocytes by preventing premature activation of the negative cell cycle regulator CDKN1C/p57KIP and maintaining the required expression levels of cardiogenic factors such as MEF2C and NKX2-5. Acts as a ligand for ACVRL1/ALK1, BMPR1A/ALK3 and BMPR1B/ALK6, leading to activation of SMAD1, SMAD5 and SMAD8 transcription factors. Inhibits endothelial cell migration and growth. May reduce cell migration and cell matrix adhesion in breast cancer cell lines. The sequence is that of Bone morphogenetic protein 10 (BMP10) from Homo sapiens (Human).